The sequence spans 480 residues: Radical SAM Nalpha-GlyT isomerase (480 aa).

Iron-sulfur cluster-binding residues include cysteine 125, cysteine 129, and cysteine 132. The segment at 457-480 is disordered; that stretch reads KIVEPTPPEEDGGERKIIPITQID.

The enzyme catalyses 5-N(alpha)-glycyl-dTMP in DNA + AH2 + S-adenosyl-L-methionine = 5-C(alpha)-glycyl-dTMP in DNA + 5'-deoxyadenosine + L-methionine + A + H(+). Functionally, isomerizes 5-N-alpha-glycinylthymidine (Nalpha-GlyT) into 5-Calpha-glycinylthymidine (Calpha-GlyT) as a step in the pathway leading to thymidine hypermodifications in the viral genome. As a final result of the pathway of hypermodification, 5-aminoethyl-2'-deoxyuridine (5-NedU) substitutes for about 30% of thymidines in the viral DNA. These modifications probably prevent degradation of viral genome by the host restriction-modification antiviral defense system. This Pseudomonas phage M6 protein is Radical SAM Nalpha-GlyT isomerase.